Here is a 151-residue protein sequence, read N- to C-terminus: Chromophore lyase CpcS/CpeS homolog (151 aa).

It belongs to the CpcS/CpeS biliprotein lyase family.

Its subcellular location is the plastid. The protein resides in the chloroplast. Its function is as follows. Might function to covalently attach a chromophore to Cys residue(s) of phycobiliproteins. This Gracilaria tenuistipitata var. liui (Red alga) protein is Chromophore lyase CpcS/CpeS homolog.